Here is a 367-residue protein sequence, read N- to C-terminus: Protein RecA (367 aa).

73-80 is a binding site for ATP; that stretch reads GPESSGKT. The tract at residues 345–367 is disordered; it reads DEPVAKKASAKESKEAKELKEVE.

This sequence belongs to the RecA family.

It is found in the cytoplasm. Can catalyze the hydrolysis of ATP in the presence of single-stranded DNA, the ATP-dependent uptake of single-stranded DNA by duplex DNA, and the ATP-dependent hybridization of homologous single-stranded DNAs. It interacts with LexA causing its activation and leading to its autocatalytic cleavage. The sequence is that of Protein RecA from Herminiimonas arsenicoxydans.